Reading from the N-terminus, the 195-residue chain is Urease accessory protein UreG (195 aa).

Glycine 9–threonine 16 is a binding site for GTP.

This sequence belongs to the SIMIBI class G3E GTPase family. UreG subfamily. Homodimer. UreD, UreF and UreG form a complex that acts as a GTP-hydrolysis-dependent molecular chaperone, activating the urease apoprotein by helping to assemble the nickel containing metallocenter of UreC. The UreE protein probably delivers the nickel.

The protein localises to the cytoplasm. Functionally, facilitates the functional incorporation of the urease nickel metallocenter. This process requires GTP hydrolysis, probably effectuated by UreG. The protein is Urease accessory protein UreG of Aliarcobacter butzleri (strain RM4018) (Arcobacter butzleri).